Reading from the N-terminus, the 96-residue chain is Protein Vpr (96 aa).

The homooligomerization stretch occupies residues 1–42 (MEQPPEDQGPQREPYNEWTLELLEELKNEAVRHFPREYLHGL). S79, S94, and S96 each carry phosphoserine; by host.

The protein belongs to the HIV-1 VPR protein family. As to quaternary structure, homooligomer, may form homodimer. Interacts with p6-gag region of the Pr55 Gag precursor protein through a (Leu-X-X)4 motif near the C-terminus of the P6gag protein. Interacts with host UNG. May interact with host RAD23A/HHR23A. Interacts with host VPRBP/DCAF1, leading to hijack the CUL4A-RBX1-DDB1-DCAF1/VPRBP complex, mediating ubiquitination of host proteins such as TERT and ZGPAT and arrest of the cell cycle in G2 phase. Post-translationally, phosphorylated on several residues by host. These phosphorylations regulate VPR activity for the nuclear import of the HIV-1 pre-integration complex.

The protein localises to the virion. It is found in the host nucleus. The protein resides in the host extracellular space. Functionally, during virus replication, may deplete host UNG protein, and incude G2-M cell cycle arrest. Acts by targeting specific host proteins for degradation by the 26S proteasome, through association with the cellular CUL4A-DDB1 E3 ligase complex by direct interaction with host VPRPB/DCAF-1. Cell cycle arrest reportedly occurs within hours of infection and is not blocked by antiviral agents, suggesting that it is initiated by the VPR carried into the virion. Additionally, VPR induces apoptosis in a cell cycle dependent manner suggesting that these two effects are mechanistically linked. Detected in the serum and cerebrospinal fluid of AIDS patient, VPR may also induce cell death to bystander cells. During virus entry, plays a role in the transport of the viral pre-integration (PIC) complex to the host nucleus. This function is crucial for viral infection of non-dividing macrophages. May act directly at the nuclear pore complex, by binding nucleoporins phenylalanine-glycine (FG)-repeat regions. The chain is Protein Vpr from Homo sapiens (Human).